We begin with the raw amino-acid sequence, 62 residues long: Potassium channel toxin gamma-KTx 1.1 (62 aa).

The first 20 residues, 1–20 (MKVLILIMIIASLMIMGVEM), serve as a signal peptide directing secretion. 4 disulfides stabilise this stretch: cysteine 25–cysteine 43, cysteine 31–cysteine 54, cysteine 40–cysteine 59, and cysteine 44–cysteine 61.

This sequence belongs to the ergtoxin family. Gamma-KTx 1 subfamily. After protein storage at -20 Celsius degrees during a couple of months, the Met-55 of a small number of toxins is naturally oxidized. This oxidized form is about three orders of magnitude less efficient (IC(50)=15 uM) than non-oxidized form. Expressed by the venom gland.

It localises to the secreted. In terms of biological role, blocks human and rat Kv11.1/KCNH2/ERG1 and Kv11.3/KCNH7/ERG3, as well as rat (but not human) Kv11.2/KCNH6/ERG2 by binding to channel outer vestibule (S5P domain) with a 1:1 stoichiometry. Inhibition data are the following: hERG1 (reversible, IC(50)~7 nM), rERG1 (reversible, Kd=6.8 nM), rERG2 (irreversible, Kd=2.8 nM), hERG3 (irreversible, Kd=4.05 nM) and rERG3 (reversible, Kd=38.1 nM) potassium channels. The toxin potency is not affected by elevating potassium ion concentration from 2 to 98 mM. This toxin only blocks channels in a closed state. At high toxin concentrations, block of Kv11.1/KCNH2/ERG1 macroscopic current is incomplete (93.5%). This suggests a kinetic mechanism model with two different states of toxin-channel binding (T+C=TC*=TC; in the TC* state, the toxin binds the channel but does not occlude the pore, whereas in the TC state the toxin binds and occludes the pore). In this model, incomplete block is explained by the relatively fast dissociation rate from the blocked channel conformation (TC) relative to the rate of conversion of the toxin-channel encounter complex (TC*) to the blocked channel conformation (TC). The chain is Potassium channel toxin gamma-KTx 1.1 from Centruroides noxius (Mexican scorpion).